The following is a 381-amino-acid chain: Adenylate cyclase (381 aa).

A disordered region spans residues 1 to 30 (MTVDDTGSGADGDGRVDPEPAPDSADPGED). A Guanylate cyclase domain is found at 191–300 (AVGFADLVGF…TTVNLASRLT (110 aa)). 2 residues coordinate Mg(2+): Asp-196 and Asp-240.

It belongs to the adenylyl cyclase class-3 family. It depends on Mg(2+) as a cofactor.

It carries out the reaction ATP = 3',5'-cyclic AMP + diphosphate. This Streptomyces coelicolor (strain ATCC BAA-471 / A3(2) / M145) protein is Adenylate cyclase (cya).